We begin with the raw amino-acid sequence, 152 residues long: Venom protein family 1 protein 2 (152 aa).

Positions 1-21 are cleaved as a signal peptide; it reads MAKLVFISFLVASFCLIGCFG. Residues C70 and C150 are joined by a disulfide bond.

It belongs to the insect vpf1 family. In terms of tissue distribution, expressed by the venom gland (posterior main gland) (at protein level).

The protein resides in the secreted. This chain is Venom protein family 1 protein 2, found in Platymeris rhadamanthus (Red spot assassin bug).